The following is a 501-amino-acid chain: Xylulose kinase (501 aa).

81 to 82 (MH) lines the substrate pocket. Asp239 (proton acceptor) is an active-site residue.

It belongs to the FGGY kinase family.

The catalysed reaction is D-xylulose + ATP = D-xylulose 5-phosphate + ADP + H(+). Catalyzes the phosphorylation of D-xylulose to D-xylulose 5-phosphate. This Lactococcus lactis subsp. lactis (strain IL1403) (Streptococcus lactis) protein is Xylulose kinase.